A 711-amino-acid polypeptide reads, in one-letter code: DNA topoisomerase 1 (711 aa).

The 132-residue stretch at 3 to 134 (KNLVVIESPN…KCQRITFNEI (132 aa)) folds into the Toprim domain. Residues E9 and D102 each contribute to the Mg(2+) site. One can recognise a Topo IA-type catalytic domain in the interval 150-604 (DQSWVQSQFA…FWSNFKEEVK (455 aa)). Positions 183–188 (SAGRVQ) are interaction with DNA. Residue Y340 is the O-(5'-phospho-DNA)-tyrosine intermediate of the active site. 2 consecutive C4-type zinc fingers follow at residues 624-652 (CPSC…FPNC) and 673-702 (CPEC…FPRC).

It belongs to the type IA topoisomerase family. As to quaternary structure, monomer. It depends on Mg(2+) as a cofactor.

The enzyme catalyses ATP-independent breakage of single-stranded DNA, followed by passage and rejoining.. Its function is as follows. Releases the supercoiling and torsional tension of DNA, which is introduced during the DNA replication and transcription, by transiently cleaving and rejoining one strand of the DNA duplex. Introduces a single-strand break via transesterification at a target site in duplex DNA. The scissile phosphodiester is attacked by the catalytic tyrosine of the enzyme, resulting in the formation of a DNA-(5'-phosphotyrosyl)-enzyme intermediate and the expulsion of a 3'-OH DNA strand. The free DNA strand then undergoes passage around the unbroken strand, thus removing DNA supercoils. Finally, in the religation step, the DNA 3'-OH attacks the covalent intermediate to expel the active-site tyrosine and restore the DNA phosphodiester backbone. The protein is DNA topoisomerase 1 of Mycoplasma pneumoniae (strain ATCC 29342 / M129 / Subtype 1) (Mycoplasmoides pneumoniae).